A 275-amino-acid polypeptide reads, in one-letter code: NH(3)-dependent NAD(+) synthetase (275 aa).

50 to 57 (GISGGVDS) is a binding site for ATP. Residue aspartate 56 coordinates Mg(2+). Arginine 147 contacts deamido-NAD(+). ATP is bound at residue threonine 167. Glutamate 172 lines the Mg(2+) pocket. Residues lysine 180 and aspartate 187 each contribute to the deamido-NAD(+) site. Positions 196 and 218 each coordinate ATP. Deamido-NAD(+) is bound at residue 267 to 268 (HK).

The protein belongs to the NAD synthetase family. In terms of assembly, homodimer.

The enzyme catalyses deamido-NAD(+) + NH4(+) + ATP = AMP + diphosphate + NAD(+) + H(+). The protein operates within cofactor biosynthesis; NAD(+) biosynthesis; NAD(+) from deamido-NAD(+) (ammonia route): step 1/1. Functionally, catalyzes the ATP-dependent amidation of deamido-NAD to form NAD. Uses ammonia as a nitrogen source. The polypeptide is NH(3)-dependent NAD(+) synthetase (Pseudomonas syringae pv. tomato (strain ATCC BAA-871 / DC3000)).